A 149-amino-acid chain; its full sequence is Protein RhiC (149 aa).

The N-terminal stretch at M1–G23 is a signal peptide.

Its subcellular location is the periplasm. Functionally, may be involved in plant-microbe interaction. This Rhizobium leguminosarum bv. viciae protein is Protein RhiC (rhiC).